The following is a 417-amino-acid chain: Gamma-glutamyl phosphate reductase (417 aa).

Belongs to the gamma-glutamyl phosphate reductase family.

It localises to the cytoplasm. It catalyses the reaction L-glutamate 5-semialdehyde + phosphate + NADP(+) = L-glutamyl 5-phosphate + NADPH + H(+). Its pathway is amino-acid biosynthesis; L-proline biosynthesis; L-glutamate 5-semialdehyde from L-glutamate: step 2/2. Its function is as follows. Catalyzes the NADPH-dependent reduction of L-glutamate 5-phosphate into L-glutamate 5-semialdehyde and phosphate. The product spontaneously undergoes cyclization to form 1-pyrroline-5-carboxylate. The polypeptide is Gamma-glutamyl phosphate reductase (Escherichia coli O6:K15:H31 (strain 536 / UPEC)).